The primary structure comprises 199 residues: HTH-type transcriptional regulator BetI (199 aa).

In terms of domain architecture, HTH tetR-type spans 8 to 68 (EIRKPQLVKA…ETMREILRQL (61 aa)). A DNA-binding region (H-T-H motif) is located at residues 31–50 (SISLISKEAGVSTGIINHYF).

Its pathway is amine and polyamine biosynthesis; betaine biosynthesis via choline pathway [regulation]. Repressor involved in the biosynthesis of the osmoprotectant glycine betaine. It represses transcription of the choline transporter BetT and the genes of BetAB involved in the synthesis of glycine betaine. The sequence is that of HTH-type transcriptional regulator BetI from Vibrio campbellii (strain ATCC BAA-1116).